Here is a 444-residue protein sequence, read N- to C-terminus: Ribulose bisphosphate carboxylase (444 aa).

The active-site Proton acceptor is Lys163. Lys165 lines the substrate pocket. Positions 189, 191, and 192 each coordinate Mg(2+). Lys189 carries the post-translational modification N6-carboxylysine. Residue His281 is the Proton acceptor of the active site. Substrate contacts are provided by residues Arg282, His314, 367–369, and 389–392; these read SGG and QLGG.

This sequence belongs to the RuBisCO large chain family. Type III subfamily. In terms of assembly, homodecamer, consisting of five dimer units which form a ring-like pentagonal structure. This arrangement is essential for its high thermostability. In contrast to form I RuBisCO, the form III RuBisCO is composed solely of large subunits. Requires Mg(2+) as cofactor.

It catalyses the reaction 2 (2R)-3-phosphoglycerate + 2 H(+) = D-ribulose 1,5-bisphosphate + CO2 + H2O. The catalysed reaction is D-ribulose 1,5-bisphosphate + O2 = 2-phosphoglycolate + (2R)-3-phosphoglycerate + 2 H(+). In terms of biological role, catalyzes the addition of molecular CO(2) and H(2)O to ribulose 1,5-bisphosphate (RuBP), generating two molecules of 3-phosphoglycerate (3-PGA). Functions in an archaeal AMP degradation pathway, together with AMP phosphorylase and R15P isomerase. This is Ribulose bisphosphate carboxylase from Thermococcus kodakarensis (strain ATCC BAA-918 / JCM 12380 / KOD1) (Pyrococcus kodakaraensis (strain KOD1)).